We begin with the raw amino-acid sequence, 110 residues long: Phosphoribosyl-ATP pyrophosphatase (110 aa).

Belongs to the PRA-PH family.

It is found in the cytoplasm. The catalysed reaction is 1-(5-phospho-beta-D-ribosyl)-ATP + H2O = 1-(5-phospho-beta-D-ribosyl)-5'-AMP + diphosphate + H(+). The protein operates within amino-acid biosynthesis; L-histidine biosynthesis; L-histidine from 5-phospho-alpha-D-ribose 1-diphosphate: step 2/9. The sequence is that of Phosphoribosyl-ATP pyrophosphatase (hisE) from Azotobacter chroococcum mcd 1.